Reading from the N-terminus, the 175-residue chain is Myosin regulatory light chain 2, atrial isoform (175 aa).

A2 carries the N-acetylalanine modification. A phosphoserine mark is found at S22 and S23. 3 consecutive EF-hand domains span residues A32 to V67, D102 to K137, and F138 to K173. Ca(2+)-binding residues include D45, N47, D49, and D56.

As to quaternary structure, myosin is a hexamer of 2 heavy chains and 4 light chains. In terms of tissue distribution, predominantly expressed in adult atrial muscle.

In Homo sapiens (Human), this protein is Myosin regulatory light chain 2, atrial isoform (MYL7).